The chain runs to 254 residues: Ribonuclease 3 (254 aa).

In terms of domain architecture, RNase III spans 24–154; the sequence is LRRLQETLGV…VIGALFLDSG (131 aa). Glu-67 is a binding site for Mg(2+). Asp-71 is an active-site residue. Residues Asp-140 and Glu-143 each contribute to the Mg(2+) site. The active site involves Glu-143. The DRBM domain occupies 181 to 250; it reads DYKSTLQVLA…ARLAWEQLSG (70 aa).

This sequence belongs to the ribonuclease III family. As to quaternary structure, homodimer. The cofactor is Mg(2+).

Its subcellular location is the cytoplasm. The enzyme catalyses Endonucleolytic cleavage to 5'-phosphomonoester.. Its function is as follows. Digests double-stranded RNA. Involved in the processing of primary rRNA transcript to yield the immediate precursors to the large and small rRNAs (23S and 16S). Processes some mRNAs, and tRNAs when they are encoded in the rRNA operon. Processes pre-crRNA and tracrRNA of type II CRISPR loci if present in the organism. This is Ribonuclease 3 from Treponema pallidum (strain Nichols).